The chain runs to 134 residues: Small ribosomal subunit protein uS8c (134 aa).

Belongs to the universal ribosomal protein uS8 family. Part of the 30S ribosomal subunit.

The protein localises to the plastid. It is found in the chloroplast. One of the primary rRNA binding proteins, it binds directly to 16S rRNA central domain where it helps coordinate assembly of the platform of the 30S subunit. This chain is Small ribosomal subunit protein uS8c (rps8), found in Draba nemorosa (Woodland whitlowgrass).